The sequence spans 348 residues: Putative S-adenosyl-L-methionine-dependent methyltransferase MRA_3439 (348 aa).

S-adenosyl-L-methionine contacts are provided by residues Asp171 and 200-201 (DL).

Belongs to the UPF0677 family.

In terms of biological role, exhibits S-adenosyl-L-methionine-dependent methyltransferase activity. The protein is Putative S-adenosyl-L-methionine-dependent methyltransferase MRA_3439 of Mycobacterium tuberculosis (strain ATCC 25177 / H37Ra).